We begin with the raw amino-acid sequence, 197 residues long: Segregation and condensation protein B (197 aa).

The protein belongs to the ScpB family. Homodimer. Homodimerization may be required to stabilize the binding of ScpA to the Smc head domains. Component of a cohesin-like complex composed of ScpA, ScpB and the Smc homodimer, in which ScpA and ScpB bind to the head domain of Smc. The presence of the three proteins is required for the association of the complex with DNA.

The protein localises to the cytoplasm. In terms of biological role, participates in chromosomal partition during cell division. May act via the formation of a condensin-like complex containing Smc and ScpA that pull DNA away from mid-cell into both cell halves. This is Segregation and condensation protein B from Bacillus pumilus (strain SAFR-032).